We begin with the raw amino-acid sequence, 470 residues long: Nuclear receptor ROR-beta (470 aa).

The segment at residues 18–93 (VIPCKICGDK…LGMSRDAVKF (76 aa)) is a DNA-binding region (nuclear receptor). 2 consecutive NR C4-type zinc fingers follow at residues 21–41 (CKIC…CEGC) and 57–81 (CPRQ…LQKC). Basic and acidic residues predominate over residues 104-117 (LYAEVQKHQQRLQE). The tract at residues 104-127 (LYAEVQKHQQRLQEQRQQQSGEAE) is disordered. In terms of domain architecture, NR LBD spans 222–460 (EIDRIAQNII…TLFPPLYKEL (239 aa)). The AF-2 signature appears at 456–461 (LYKELF).

The protein belongs to the nuclear hormone receptor family. NR1 subfamily. In terms of assembly, monomer. Interacts with CRX. In terms of tissue distribution, expressed in inner and outer neuroblastic layer as well as in the ganglion cell layer of the developing retina. Expressed in bone marrow osteoprogenitor cells.

The protein resides in the nucleus. It is found in the nucleoplasm. Nuclear receptor that binds DNA as a monomer to ROR response elements (RORE) containing a single core motif half-site 5'-AGGTCA-3' preceded by a short A-T-rich sequence. Considered to have intrinsic transcriptional activity, have some natural ligands such as all-trans retinoic acid (ATRA) and other retinoids which act as inverse agonists repressing the transcriptional activity. Required for normal postnatal development of rod and cone photoreceptor cells. Modulates rod photoreceptors differentiation at least by inducing the transcription factor NRL-mediated pathway. In cone photoreceptor cells, regulates transcription of OPN1SW. Involved in the regulation of the period length and stability of the circadian rhythm. May control cytoarchitectural patterning of neocortical neurons during development. May act in a dose-dependent manner to regulate barrel formation upon innervation of layer IV neurons by thalamocortical axons. May play a role in the suppression of osteoblastic differentiation through the inhibition of RUNX2 transcriptional activity. Functionally, isoform 1 is critical for hindlimb motor control and for the differentiation of amacrine and horizontal cells in the retina. Regulates the expression of PTF1A synergistically with FOXN4. In Mus musculus (Mouse), this protein is Nuclear receptor ROR-beta (Rorb).